Reading from the N-terminus, the 225-residue chain is NAD(P)H-quinone oxidoreductase subunit K, chloroplastic (225 aa).

Residues Cys-43, Cys-44, Cys-108, and Cys-139 each contribute to the [4Fe-4S] cluster site.

The protein belongs to the complex I 20 kDa subunit family. NDH is composed of at least 16 different subunits, 5 of which are encoded in the nucleus. Requires [4Fe-4S] cluster as cofactor.

It localises to the plastid. It is found in the chloroplast thylakoid membrane. It catalyses the reaction a plastoquinone + NADH + (n+1) H(+)(in) = a plastoquinol + NAD(+) + n H(+)(out). The catalysed reaction is a plastoquinone + NADPH + (n+1) H(+)(in) = a plastoquinol + NADP(+) + n H(+)(out). Functionally, NDH shuttles electrons from NAD(P)H:plastoquinone, via FMN and iron-sulfur (Fe-S) centers, to quinones in the photosynthetic chain and possibly in a chloroplast respiratory chain. The immediate electron acceptor for the enzyme in this species is believed to be plastoquinone. Couples the redox reaction to proton translocation, and thus conserves the redox energy in a proton gradient. This chain is NAD(P)H-quinone oxidoreductase subunit K, chloroplastic, found in Populus alba (White poplar).